Reading from the N-terminus, the 176-residue chain is ATP-dependent protease subunit HslV (176 aa).

Thr-2 is a catalytic residue. Na(+)-binding residues include Gly-157, Cys-160, and Thr-163.

The protein belongs to the peptidase T1B family. HslV subfamily. A double ring-shaped homohexamer of HslV is capped on each side by a ring-shaped HslU homohexamer. The assembly of the HslU/HslV complex is dependent on binding of ATP.

Its subcellular location is the cytoplasm. The enzyme catalyses ATP-dependent cleavage of peptide bonds with broad specificity.. Allosterically activated by HslU binding. Its function is as follows. Protease subunit of a proteasome-like degradation complex believed to be a general protein degrading machinery. This is ATP-dependent protease subunit HslV from Pseudomonas syringae pv. tomato (strain ATCC BAA-871 / DC3000).